The sequence spans 245 residues: tRNA (guanine-N(1)-)-methyltransferase (245 aa).

S-adenosyl-L-methionine is bound by residues glycine 111 and 131–136 (MGDYVL).

The protein belongs to the RNA methyltransferase TrmD family. In terms of assembly, homodimer.

It is found in the cytoplasm. It catalyses the reaction guanosine(37) in tRNA + S-adenosyl-L-methionine = N(1)-methylguanosine(37) in tRNA + S-adenosyl-L-homocysteine + H(+). Functionally, specifically methylates guanosine-37 in various tRNAs. The sequence is that of tRNA (guanine-N(1)-)-methyltransferase from Staphylococcus aureus (strain USA300).